The sequence spans 202 residues: Response regulator RamR (202 aa).

A response regulatory region spans residues 1-121 (MGEMVRIAVV…LITAVHTVAR (121 aa)). In terms of domain architecture, HTH luxR-type spans 135–200 (LKGAEMPLTT…DAIRIVQSAG (66 aa)). A DNA-binding region (H-T-H motif) is located at residues 159-178 (IAEIAARLHLSRGTVRNYMA).

As to quaternary structure, homodimer, in the absence of phosphorylation. In terms of processing, may be phosphorylated by an unknown kinase, probably on Asp-56.

Its function is as follows. A transcription factor required for aerial hyphae formation on rich medium. Activates transcription of ramC. Might be part of a two-component regulatory system. Binds the promoter of ramC. Non-phosphorylated protein cooperatively binds multiple sites in the ramC promoter. Has not been seen to autophosphorylate using the small molecule phosphodonors phosphoramidate, acetyl phosphate or carbamoyl phosphate. Upon low expression suppresses the bald (bld, no aerial hyphae) phenotype of citA but not bldJ mutants; higher expression also suppresses the bldJ mutant as well as several other bld mutations, inducing SapB production even on media where SapB is normally not produced. Expression of the ram locus (ramA, ramB and ramR) induces rapid aerial mycelium formation in S.lividans. Overexpression suppresses the no aerial hyphae phenotype of a chaplin-negative strain, probably by inducing expression of SapB. Overexpression of RamR show there are about 280 genes having at least a threefold increase or fourfold decrease in RNA abundance versus wild-type including gene cluster SCO4072-SCO4075. This Streptomyces coelicolor (strain ATCC BAA-471 / A3(2) / M145) protein is Response regulator RamR.